The sequence spans 598 residues: UvrABC system protein C (598 aa).

Residues 13–92 (SSPGVYLMKD…IKKYQPRYNV (80 aa)) enclose the GIY-YIG domain. A UVR domain is found at 206–241 (RSTISNLEKAIEKASQEQKFEHAAALYRTLTLIRQT).

This sequence belongs to the UvrC family. As to quaternary structure, interacts with UvrB in an incision complex.

The protein localises to the cytoplasm. The UvrABC repair system catalyzes the recognition and processing of DNA lesions. UvrC both incises the 5' and 3' sides of the lesion. The N-terminal half is responsible for the 3' incision and the C-terminal half is responsible for the 5' incision. This chain is UvrABC system protein C, found in Chlamydia trachomatis serovar A (strain ATCC VR-571B / DSM 19440 / HAR-13).